The following is a 113-amino-acid chain: uncharacterized protein (113 aa).

Residues 1–19 (MDKKSAHRNPEDAKAGKYE) are compositionally biased toward basic and acidic residues. The interval 1–94 (MDKKSAHRNP…NKWRGKRKVS (94 aa)) is disordered. The span at 20 to 41 (GKHKRKKKRKQNQNQHRSRHRS) shows a compositional bias: basic residues. Residues 52–66 (FPSSSSSSSGSQTDS) are compositionally biased toward low complexity. The segment covering 75–92 (KIKKKRREKTNKWRGKRK) has biased composition (basic residues).

This is an uncharacterized protein from Macaca fascicularis (Crab-eating macaque).